The chain runs to 265 residues: 3-methyl-2-oxobutanoate hydroxymethyltransferase (265 aa).

The Mg(2+) site is built by aspartate 43 and aspartate 82. 3-methyl-2-oxobutanoate contacts are provided by residues 43 to 44, aspartate 82, and lysine 111; that span reads DS. A Mg(2+)-binding site is contributed by glutamate 113. Glutamate 180 serves as the catalytic Proton acceptor.

It belongs to the PanB family. As to quaternary structure, homodecamer; pentamer of dimers. Requires Mg(2+) as cofactor.

The protein resides in the cytoplasm. It carries out the reaction 3-methyl-2-oxobutanoate + (6R)-5,10-methylene-5,6,7,8-tetrahydrofolate + H2O = 2-dehydropantoate + (6S)-5,6,7,8-tetrahydrofolate. The protein operates within cofactor biosynthesis; (R)-pantothenate biosynthesis; (R)-pantoate from 3-methyl-2-oxobutanoate: step 1/2. Functionally, catalyzes the reversible reaction in which hydroxymethyl group from 5,10-methylenetetrahydrofolate is transferred onto alpha-ketoisovalerate to form ketopantoate. The chain is 3-methyl-2-oxobutanoate hydroxymethyltransferase from Francisella tularensis subsp. holarctica (strain OSU18).